A 214-amino-acid chain; its full sequence is Large ribosomal subunit protein uL3 (214 aa).

N5-methylglutamine is present on Gln153.

It belongs to the universal ribosomal protein uL3 family. Part of the 50S ribosomal subunit. Forms a cluster with proteins L14 and L19. Methylated by PrmB.

One of the primary rRNA binding proteins, it binds directly near the 3'-end of the 23S rRNA, where it nucleates assembly of the 50S subunit. This is Large ribosomal subunit protein uL3 from Aromatoleum aromaticum (strain DSM 19018 / LMG 30748 / EbN1) (Azoarcus sp. (strain EbN1)).